Here is a 1131-residue protein sequence, read N- to C-terminus: Topless-related protein 2 (1131 aa).

In terms of domain architecture, LisH spans 4–36 (LSRELVFLILQFLDEEKFKESVHKLEQESGFFF). The 59-residue stretch at 34–92 (FFFNIKYFEEKALAGEWDEVEKYLSGFTKVDDNRYSMKIFFEIRKQKYLEALDRNDRAK) folds into the CTLH domain. Threonine 214 bears the Phosphothreonine mark. 12 WD repeats span residues 345 to 385 (RQGS…KVVT), 407 to 446 (EPSI…LRQH), 451 to 493 (AHVG…FTFE), 495 to 535 (HEAP…SRVD), 585 to 624 (FRKK…LLTV), 629 to 668 (GGLP…RTLR), 763 to 802 (DSVS…QNPT), 829 to 867 (NPEG…VMTT), 870 to 910 (PPPP…VKTK), 913 to 952 (GHQK…KKKS), 959 to 999 (PGKA…CIHK), and 1005 to 1044 (ALSS…LRCR). The interval 1099–1131 (VGVAAGSDKAGTENGRPSSSSAANNSSSDQIQR) is disordered. Positions 1116 to 1131 (SSSSAANNSSSDQIQR) are enriched in low complexity.

In terms of assembly, tetramer. Interacts with NINJA/AFPH2. Interacts with SMXL6, SMXL7 and SMXL8. Interacts with SPL (via EAR motif). Interacts with SPEAR3/TIE1.

The protein localises to the nucleus. Transcriptional corepressor. Negative regulator of jasmonate responses. This chain is Topless-related protein 2 (TPR2), found in Arabidopsis thaliana (Mouse-ear cress).